The chain runs to 473 residues: tRNA-2-methylthio-N(6)-dimethylallyladenosine synthase (473 aa).

The 121-residue stretch at 5–125 (RKLHIKSYGC…LPQLLARAKA (121 aa)) folds into the MTTase N-terminal domain. Residues Cys-14, Cys-50, Cys-88, Cys-166, Cys-170, and Cys-173 each contribute to the [4Fe-4S] cluster site. In terms of domain architecture, Radical SAM core spans 152 to 384 (RARGISAFVT…QNLIDSQQSA (233 aa)). A TRAM domain is found at 387 to 449 (RAAVGTTVDV…RYSLLGSLAS (63 aa)). A compositionally biased stretch (low complexity) spans 453–462 (SRASADDAPP). The segment at 453–473 (SRASADDAPPVGASSPAIMGV) is disordered.

The protein belongs to the methylthiotransferase family. MiaB subfamily. As to quaternary structure, monomer. The cofactor is [4Fe-4S] cluster.

The protein localises to the cytoplasm. It carries out the reaction N(6)-dimethylallyladenosine(37) in tRNA + (sulfur carrier)-SH + AH2 + 2 S-adenosyl-L-methionine = 2-methylsulfanyl-N(6)-dimethylallyladenosine(37) in tRNA + (sulfur carrier)-H + 5'-deoxyadenosine + L-methionine + A + S-adenosyl-L-homocysteine + 2 H(+). Functionally, catalyzes the methylthiolation of N6-(dimethylallyl)adenosine (i(6)A), leading to the formation of 2-methylthio-N6-(dimethylallyl)adenosine (ms(2)i(6)A) at position 37 in tRNAs that read codons beginning with uridine. The sequence is that of tRNA-2-methylthio-N(6)-dimethylallyladenosine synthase from Nitrobacter hamburgensis (strain DSM 10229 / NCIMB 13809 / X14).